The following is a 274-amino-acid chain: Large ribosomal subunit protein uL2 (274 aa).

Residues 224–259 (AMNPVDHPHGGGEGRTSGGRHPVTPWGIPTKGYKTR) form a disordered region.

This sequence belongs to the universal ribosomal protein uL2 family. As to quaternary structure, part of the 50S ribosomal subunit. Forms a bridge to the 30S subunit in the 70S ribosome.

In terms of biological role, one of the primary rRNA binding proteins. Required for association of the 30S and 50S subunits to form the 70S ribosome, for tRNA binding and peptide bond formation. It has been suggested to have peptidyltransferase activity; this is somewhat controversial. Makes several contacts with the 16S rRNA in the 70S ribosome. This Citrifermentans bemidjiense (strain ATCC BAA-1014 / DSM 16622 / JCM 12645 / Bem) (Geobacter bemidjiensis) protein is Large ribosomal subunit protein uL2.